The chain runs to 177 residues: Chorismate pyruvate-lyase (177 aa).

Residues Met-36, Arg-78, Leu-116, and Glu-157 each coordinate substrate.

It belongs to the UbiC family. As to quaternary structure, monomer.

Its subcellular location is the cytoplasm. The enzyme catalyses chorismate = 4-hydroxybenzoate + pyruvate. It participates in cofactor biosynthesis; ubiquinone biosynthesis. In terms of biological role, removes the pyruvyl group from chorismate, with concomitant aromatization of the ring, to provide 4-hydroxybenzoate (4HB) for the ubiquinone pathway. This is Chorismate pyruvate-lyase from Pectobacterium atrosepticum (strain SCRI 1043 / ATCC BAA-672) (Erwinia carotovora subsp. atroseptica).